The sequence spans 130 residues: Ribosome biogenesis inhibitor MINAS-60 (130 aa).

Residues 61-130 form a disordered region; that stretch reads SRVRRIPTRP…RRRRPVTSSC (70 aa). Basic residues predominate over residues 109 to 130; it reads KGRRRRRRRMRRRRRRPVTSSC.

In terms of assembly, interacts with 60S ribosome assembly factors GTPBP4 and MRTO4.

It is found in the nucleus. The protein resides in the nucleolus. Functionally, acts as a late-stage inhibitor of pre-60S ribosome assembly by preventing pre-60S ribosome export from nucleus. This is Ribosome biogenesis inhibitor MINAS-60 from Homo sapiens (Human).